Reading from the N-terminus, the 525-residue chain is Anti-silencing protein 2 (525 aa).

Residues 467-525 (LPRVPTDSPQLPSKDKSQETAKKDDRPKLVANEPVTLDTSTPPVAQSLADSKHCSGLHK) form a disordered region. Residues 479-494 (SKDKSQETAKKDDRPK) are compositionally biased toward basic and acidic residues.

Derepression of silent mating type loci when overexpressed. The polypeptide is Anti-silencing protein 2 (ASF2) (Saccharomyces cerevisiae (strain ATCC 204508 / S288c) (Baker's yeast)).